Consider the following 58-residue polypeptide: Sperm protamine P2 (58 aa).

The interval 1 to 58 (RRRRRRGKGRGKKRKGKGKKRGKGRRRGSKGRKKKKGKGKKRKRRRRRRRKGSKGKGK) is disordered.

Gonads.

It localises to the nucleus. The protein localises to the chromosome. In terms of biological role, protamines substitute for histones in the chromatin of sperm during the haploid phase of spermatogenesis. They compact sperm DNA into a highly condensed, stable and inactive complex. This chain is Sperm protamine P2, found in Bolinus brandaris (Purple dye murex).